Consider the following 122-residue polypeptide: Conotoxin flf14.2 (122 aa).

The signal sequence occupies residues 1 to 22 (MGFRVLVLIVMVTTSALPFTFS). Positions 23–96 (EESGRSPFRP…AESPVGQKRW (74 aa)) are excised as a propeptide. The segment at 53–91 (RADGQPSDMRQPEMRRPEMRRPEVRRPEVRQPEFAESPV) is disordered. Residues 62-85 (RQPEMRRPEMRRPEVRRPEVRQPE) show a composition bias toward basic and acidic residues. Disulfide bonds link Cys101–Cys121 and Cys105–Cys117.

Belongs to the conotoxin R superfamily. Expressed by the venom duct.

It is found in the secreted. The protein is Conotoxin flf14.2 of Conus anabathrum floridanus (Florida cone).